Reading from the N-terminus, the 62-residue chain is UPF0434 protein Rleg2_3773 (62 aa).

The protein belongs to the UPF0434 family.

This Rhizobium leguminosarum bv. trifolii (strain WSM2304) protein is UPF0434 protein Rleg2_3773.